Reading from the N-terminus, the 267-residue chain is MHSPTFSMVKIKTASQDYLPIPVAVTKASRLKHGRTLKLMTAHGLKIRVKVAEARDKLYMTIGWKEFIQEAGLKMGESKSVVFRTLSKSRLNVIIFNKEGYSRCPIPDKAAKALINNQSSSAPSFSTKSTAPRHPSFTNVEANTKRIVKDMCCYNKRMKLSSEVKNYVRDIAQFLDYSSKFYIVTMKNIHEVRQGDGCYNLKAGYGQISHKIIFKEIYSATSTASQQDTSGKNLHFSLPQDESVAGNSTSPVNAMFMPCTSNILLLL.

Positions 4-99 form a DNA-binding region, TF-B3; the sequence is PTFSMVKIKT…RLNVIIFNKE (96 aa).

Its subcellular location is the nucleus. The chain is Putative B3 domain-containing protein LOC_Os07g12820 from Oryza sativa subsp. japonica (Rice).